Here is a 364-residue protein sequence, read N- to C-terminus: Histidinol-phosphate aminotransferase (364 aa).

N6-(pyridoxal phosphate)lysine is present on lysine 225.

This sequence belongs to the class-II pyridoxal-phosphate-dependent aminotransferase family. Histidinol-phosphate aminotransferase subfamily. In terms of assembly, homodimer. The cofactor is pyridoxal 5'-phosphate.

It catalyses the reaction L-histidinol phosphate + 2-oxoglutarate = 3-(imidazol-4-yl)-2-oxopropyl phosphate + L-glutamate. The protein operates within amino-acid biosynthesis; L-histidine biosynthesis; L-histidine from 5-phospho-alpha-D-ribose 1-diphosphate: step 7/9. The chain is Histidinol-phosphate aminotransferase from Sulfurovum sp. (strain NBC37-1).